The sequence spans 421 residues: Testin (421 aa).

The region spanning 92–199 is the PET domain; that stretch reads MILTNPVAAK…GDVKLPREMD (108 aa). The tract at residues 134–164 is disordered; the sequence is KQPVAGSEGAQYRKKQLAKQLPAHDQDPSKC. Residues 155–164 are compositionally biased toward basic and acidic residues; it reads PAHDQDPSKC. LIM zinc-binding domains lie at 234–297, 299–359, and 362–421; these read YSCY…CDSE, PRCA…NHAV, and QGCH…KMMS.

This sequence belongs to the prickle / espinas / testin family. As to quaternary structure, interacts via LIM domain 1 with ZYX. Interacts (via LIM domain 3) with ENAH and VASP. Interacts with ALKBH4, talin, actin, alpha-actinin, GRIP1 and PXN. Interacts (via LIM domain 2) with ACTL7A (via N-terminus). Heterodimer with ACTL7A; the heterodimer interacts with ENAH to form a heterotrimer.

It localises to the cytoplasm. The protein resides in the cell junction. The protein localises to the focal adhesion. In terms of biological role, scaffold protein that may play a role in cell adhesion, cell spreading and in the reorganization of the actin cytoskeleton. Plays a role in the regulation of cell proliferation. May act as a tumor suppressor. The sequence is that of Testin (TES) from Rhinolophus ferrumequinum (Greater horseshoe bat).